We begin with the raw amino-acid sequence, 179 residues long: NADH-quinone oxidoreductase subunit B (179 aa).

The [4Fe-4S] cluster site is built by C35, C36, C100, and C129.

It belongs to the complex I 20 kDa subunit family. In terms of assembly, NDH-1 is composed of 14 different subunits. Subunits NuoB, C, D, E, F, and G constitute the peripheral sector of the complex. It depends on [4Fe-4S] cluster as a cofactor.

The protein resides in the cell inner membrane. It carries out the reaction a quinone + NADH + 5 H(+)(in) = a quinol + NAD(+) + 4 H(+)(out). Its function is as follows. NDH-1 shuttles electrons from NADH, via FMN and iron-sulfur (Fe-S) centers, to quinones in the respiratory chain. Couples the redox reaction to proton translocation (for every two electrons transferred, four hydrogen ions are translocated across the cytoplasmic membrane), and thus conserves the redox energy in a proton gradient. This Aquifex aeolicus (strain VF5) protein is NADH-quinone oxidoreductase subunit B.